We begin with the raw amino-acid sequence, 96 residues long: UPF0235 protein YE3436 (96 aa).

It belongs to the UPF0235 family.

The sequence is that of UPF0235 protein YE3436 from Yersinia enterocolitica serotype O:8 / biotype 1B (strain NCTC 13174 / 8081).